The following is a 298-amino-acid chain: O-glycoside alpha-1,2-mannosyltransferase homolog 6 (298 aa).

The active-site Nucleophile is E220.

It belongs to the glycosyltransferase 15 family.

It localises to the cytoplasm. Its subcellular location is the nucleus. Its function is as follows. Probable mannosyltransferase involved in O-glycosylation of cell wall and secreted proteins. This chain is O-glycoside alpha-1,2-mannosyltransferase homolog 6 (omh6), found in Schizosaccharomyces pombe (strain 972 / ATCC 24843) (Fission yeast).